Here is a 91-residue protein sequence, read N- to C-terminus: Small ribosomal subunit protein uS19 (91 aa).

The protein belongs to the universal ribosomal protein uS19 family.

Its function is as follows. Protein S19 forms a complex with S13 that binds strongly to the 16S ribosomal RNA. The protein is Small ribosomal subunit protein uS19 of Afipia carboxidovorans (strain ATCC 49405 / DSM 1227 / KCTC 32145 / OM5) (Oligotropha carboxidovorans).